Here is a 156-residue protein sequence, read N- to C-terminus: Myosin, essential light chain, adductor muscle (156 aa).

2 consecutive EF-hand domains span residues 6–43 (DEID…LGIN) and 81–116 (GTFA…LGER).

Functionally, in molluscan muscle, calcium regulation is associated with myosin rather than with actin. Muscle myosin contains two types of light chains: the catalytic light chain, essential for ATPase activity, and the regulatory light chain, a calcium-binding protein responsible for Ca(2+) dependent binding and Ca(2+) dependent Mg-ATPase activity. The sequence is that of Myosin, essential light chain, adductor muscle from Mizuhopecten yessoensis (Japanese scallop).